Reading from the N-terminus, the 158-residue chain is Peroxidase (158 aa).

Pro-2 contacts substrate. His-32 lines the heme b pocket. A Ca(2+)-binding site is contributed by Thr-33. A disulfide bridge links Cys-39 with Cys-64. N-linked (GlcNAc...) asparagine glycosylation is present at Asn-48. Residues Asp-78, Thr-81, and Asp-86 each coordinate Ca(2+).

It belongs to the peroxidase family. Classical plant (class III) peroxidase subfamily. Requires Ca(2+) as cofactor. The cofactor is heme b.

It catalyses the reaction 2 a phenolic donor + H2O2 = 2 a phenolic radical donor + 2 H2O. Functionally, removal of H(2)O(2), oxidation of toxic reductants, biosynthesis and degradation of lignin, suberization, auxin catabolism, response to environmental stresses such as wounding, pathogen attack and oxidative stress. These functions might be dependent on each isozyme/isoform in each plant tissue. This is Peroxidase from Lupinus polyphyllus (Large-leaved lupine).